The sequence spans 439 residues: tRNA modification GTPase MnmE (439 aa).

3 residues coordinate (6S)-5-formyl-5,6,7,8-tetrahydrofolate: Arg-26, Glu-88, and Arg-127. Positions 220 to 367 (GARLALIGRP…LRDAIHTALI (148 aa)) constitute a TrmE-type G domain. Residue Asn-230 participates in K(+) binding. Residues 230 to 235 (NAGKSS), 249 to 255 (TPIPGTT), and 274 to 277 (DTAG) each bind GTP. Mg(2+) is bound at residue Ser-234. K(+)-binding residues include Thr-249, Ile-251, and Thr-254. Residue Thr-255 coordinates Mg(2+). Residue Lys-439 coordinates (6S)-5-formyl-5,6,7,8-tetrahydrofolate.

This sequence belongs to the TRAFAC class TrmE-Era-EngA-EngB-Septin-like GTPase superfamily. TrmE GTPase family. In terms of assembly, homodimer. Heterotetramer of two MnmE and two MnmG subunits. K(+) is required as a cofactor.

The protein resides in the cytoplasm. In terms of biological role, exhibits a very high intrinsic GTPase hydrolysis rate. Involved in the addition of a carboxymethylaminomethyl (cmnm) group at the wobble position (U34) of certain tRNAs, forming tRNA-cmnm(5)s(2)U34. The polypeptide is tRNA modification GTPase MnmE (Deinococcus geothermalis (strain DSM 11300 / CIP 105573 / AG-3a)).